We begin with the raw amino-acid sequence, 393 residues long: Thermostable carboxypeptidase 2 (393 aa).

His-104, Asp-109, and His-245 together coordinate Zn(2+). Tyr-302 serves as the catalytic Proton donor. The Nucleophile role is filled by Glu-373.

It belongs to the peptidase M20 family. As to quaternary structure, homotetramer. Zn(2+) is required as a cofactor.

In terms of biological role, can release basic, acidic, aromatic, and, to a lesser extent, aliphatic amino acids. This chain is Thermostable carboxypeptidase 2 (cpsA2), found in Saccharolobus solfataricus (strain ATCC 35092 / DSM 1617 / JCM 11322 / P2) (Sulfolobus solfataricus).